A 709-amino-acid chain; its full sequence is ATP-dependent RNA helicase dbp7 (709 aa).

Positions 13–90 are disordered; sequence DNAQSRKPEA…KPAHELKGNK (78 aa). Residues 16–34 are compositionally biased toward basic and acidic residues; sequence QSRKPEALKSSRRWTDRAR. Polar residues predominate over residues 44 to 65; that stretch reads NESSKSTVKRNSGTNGASTDYK. Over residues 66–90 the composition is skewed to basic and acidic residues; sequence NSQKEKVINPVFDPRKPAHELKGNK. Residues 138–167 carry the Q motif motif; it reads TNFAGVQLDTQLADHLNNKMNISAPTAIQS. Residues 172–366 form the Helicase ATP-binding domain; it reads ALLNTDDKDA…DSALKDALYL (195 aa). An ATP-binding site is contributed by 185 to 192; sequence AQTGSGKT. The DEAD box signature appears at 301–304; that stretch reads DEGD. The region spanning 404–580 is the Helicase C-terminal domain; it reads LLRSHVRSYK…EQPNGPSGLL (177 aa). Residues 662-690 are disordered; the sequence is GKISGANSSKPRKQGGSVDKGKSKSSKDI.

The protein belongs to the DEAD box helicase family. DDX31/DBP7 subfamily.

It localises to the nucleus. The protein localises to the nucleolus. The enzyme catalyses ATP + H2O = ADP + phosphate + H(+). ATP-binding RNA helicase involved in the biogenesis of 60S ribosomal subunits and is required for the normal formation of 25S and 5.8S rRNAs. The chain is ATP-dependent RNA helicase dbp7 (dbp7) from Schizosaccharomyces pombe (strain 972 / ATCC 24843) (Fission yeast).